The primary structure comprises 678 residues: Methionine--tRNA ligase (678 aa).

Positions 14–24 (PYANGSIHLGH) match the 'HIGH' region motif. The Zn(2+) site is built by Cys145, Cys148, Cys158, and Cys161. The 'KMSKS' region signature appears at 331–335 (KMSKS). Position 334 (Lys334) interacts with ATP. In terms of domain architecture, tRNA-binding spans 576-678 (AFAAVDLRIA…SGAKPGQRVK (103 aa)).

Belongs to the class-I aminoacyl-tRNA synthetase family. MetG type 1 subfamily. As to quaternary structure, homodimer. Zn(2+) is required as a cofactor.

Its subcellular location is the cytoplasm. It catalyses the reaction tRNA(Met) + L-methionine + ATP = L-methionyl-tRNA(Met) + AMP + diphosphate. Is required not only for elongation of protein synthesis but also for the initiation of all mRNA translation through initiator tRNA(fMet) aminoacylation. The protein is Methionine--tRNA ligase of Ectopseudomonas mendocina (strain ymp) (Pseudomonas mendocina).